The chain runs to 477 residues: Aspartyl/glutamyl-tRNA(Asn/Gln) amidotransferase subunit B (477 aa).

It belongs to the GatB/GatE family. GatB subfamily. Heterotrimer of A, B and C subunits.

The enzyme catalyses L-glutamyl-tRNA(Gln) + L-glutamine + ATP + H2O = L-glutaminyl-tRNA(Gln) + L-glutamate + ADP + phosphate + H(+). The catalysed reaction is L-aspartyl-tRNA(Asn) + L-glutamine + ATP + H2O = L-asparaginyl-tRNA(Asn) + L-glutamate + ADP + phosphate + 2 H(+). Its function is as follows. Allows the formation of correctly charged Asn-tRNA(Asn) or Gln-tRNA(Gln) through the transamidation of misacylated Asp-tRNA(Asn) or Glu-tRNA(Gln) in organisms which lack either or both of asparaginyl-tRNA or glutaminyl-tRNA synthetases. The reaction takes place in the presence of glutamine and ATP through an activated phospho-Asp-tRNA(Asn) or phospho-Glu-tRNA(Gln). The polypeptide is Aspartyl/glutamyl-tRNA(Asn/Gln) amidotransferase subunit B (Legionella pneumophila (strain Paris)).